Consider the following 243-residue polypeptide: Sugar fermentation stimulation protein homolog (243 aa).

This sequence belongs to the SfsA family.

This Acaryochloris marina (strain MBIC 11017) protein is Sugar fermentation stimulation protein homolog.